Reading from the N-terminus, the 453-residue chain is Ribosome biogenesis protein SSF1 (453 aa).

Positions 1–11 (MAKRRQKKRTH) are enriched in basic residues. Disordered stretches follow at residues 1–22 (MAKR…EQGI), 275–324 (KAKH…PRKK), and 374–453 (KMRL…SEVE). Positions 26-348 (MVIRVGQTSL…LVKIEEGICS (323 aa)) constitute a Brix domain. The segment covering 288–300 (PVEKKDNKEREKE) has biased composition (basic and acidic residues). Residue Thr-301 is modified to Phosphothreonine. Over residues 374–398 (KMRLKEQRKKEQEENIAKKKAVKDA) the composition is skewed to basic and acidic residues. Residues 399-409 (KKQRKLERRKA) show a composition bias toward basic residues. Residues 410–423 (RAAEGGEGQGKDDA) show a composition bias toward basic and acidic residues. Acidic residues predominate over residues 442 to 453 (EDLDSDLFSEVE).

Part of a complex that includes BRX1, RPF1, RPF2 and SSF1 or SSF2.

The protein resides in the nucleus. It is found in the nucleolus. In terms of biological role, required for biogenesis of the 60S ribosomal subunit. The protein is Ribosome biogenesis protein SSF1 (SSF1) of Saccharomyces cerevisiae (strain ATCC 204508 / S288c) (Baker's yeast).